Consider the following 342-residue polypeptide: Anthranilate phosphoribosyltransferase (342 aa).

Residues Gly84, 87–88 (GD), Thr92, 94–97 (NIST), 112–120 (KHGGRSVSS), and Ser124 contribute to the 5-phospho-alpha-D-ribose 1-diphosphate site. Anthranilate is bound at residue Gly84. Ser96 lines the Mg(2+) pocket. Residue Arg170 coordinates anthranilate. 2 residues coordinate Mg(2+): Asp229 and Glu230.

It belongs to the anthranilate phosphoribosyltransferase family. As to quaternary structure, homodimer. The cofactor is Mg(2+).

It carries out the reaction N-(5-phospho-beta-D-ribosyl)anthranilate + diphosphate = 5-phospho-alpha-D-ribose 1-diphosphate + anthranilate. Its pathway is amino-acid biosynthesis; L-tryptophan biosynthesis; L-tryptophan from chorismate: step 2/5. Functionally, catalyzes the transfer of the phosphoribosyl group of 5-phosphorylribose-1-pyrophosphate (PRPP) to anthranilate to yield N-(5'-phosphoribosyl)-anthranilate (PRA). This is Anthranilate phosphoribosyltransferase from Verminephrobacter eiseniae (strain EF01-2).